Here is a 540-residue protein sequence, read N- to C-terminus: Membrane protein insertase YidC (540 aa).

The helical transmembrane segment at 6 to 26 threads the bilayer; the sequence is NILLIALALVSFLLFQQWQVA. The segment covering 36 to 47 has biased composition (low complexity); the sequence is QAQSSSSLPAPS. A disordered region spans residues 36–63; that stretch reads QAQSSSSLPAPSFADELDPVPGQQQASA. The next 4 membrane-spanning stretches (helical) occupy residues 342–362, 417–437, 455–475, and 496–516; these read AFIQ…TFIV, LGGC…YWAL, LSAQ…MFLI, and PVMF…YWLV.

This sequence belongs to the OXA1/ALB3/YidC family. Type 1 subfamily. As to quaternary structure, interacts with the Sec translocase complex via SecD. Specifically interacts with transmembrane segments of nascent integral membrane proteins during membrane integration.

The protein localises to the cell inner membrane. Functionally, required for the insertion and/or proper folding and/or complex formation of integral membrane proteins into the membrane. Involved in integration of membrane proteins that insert both dependently and independently of the Sec translocase complex, as well as at least some lipoproteins. Aids folding of multispanning membrane proteins. This is Membrane protein insertase YidC from Vibrio parahaemolyticus serotype O3:K6 (strain RIMD 2210633).